The chain runs to 790 residues: E3 ubiquitin-protein ligase Jade-2 (790 aa).

2 disordered regions span residues 1 to 52 and 111 to 130; these read MEEK…PSEV and GPPA…SQPD. Ser9 and Ser15 each carry phosphoserine. Low complexity predominate over residues 9–28; sequence SISSDNSDTTDSHATSTSAS. 2 positions are modified to N6-acetyllysine: Lys32 and Lys38. Position 117 is a phosphoserine (Ser117). The PHD-type 1 zinc-finger motif lies at 199–249; that stretch reads DVVCDVCRSPEGEDGNEMVFCDKCNVCVHQACYGILKVPTGSWLCRTCALG. The C2HC pre-PHD-type zinc-finger motif lies at 251 to 285; that stretch reads QPKCLLCPKRGGALKPTRSGTKWVHVSCALWIPEV. Residue Lys298 is modified to N6-acetyllysine. The segment at 309-365 adopts a PHD-type 2 zinc-finger fold; sequence LSCSLCKECTGTCIQCSMPSCVTAFHVTCAFDHGLEMRTILADNDEVKFKSFCQEHS. Disordered stretches follow at residues 361 to 386 and 578 to 777; these read CQEH…AGED and SFMR…PREA. A compositionally biased stretch (polar residues) spans 372 to 381; it reads EPTSEPTEPS. Basic residues predominate over residues 593–606; it reads KARGRTRLPAKKKP. A compositionally biased stretch (low complexity) spans 684–693; the sequence is AASVAADSDV. Positions 737 to 747 are enriched in basic and acidic residues; the sequence is ERPKVSLHFDT. Over residues 757-767 the composition is skewed to acidic residues; sequence EMSDSDVEAED.

It belongs to the JADE family. As to quaternary structure, component of the HBO1 complex composed at least of ING4 or ING5, MYST2/HBO1, MEAF6, and one of JADE1, JADE2 and JADE3. Interacts (via C-terminus) with KDM1A (via AOD/Tower domain).

It carries out the reaction S-ubiquitinyl-[E2 ubiquitin-conjugating enzyme]-L-cysteine + [acceptor protein]-L-lysine = [E2 ubiquitin-conjugating enzyme]-L-cysteine + N(6)-ubiquitinyl-[acceptor protein]-L-lysine.. It participates in protein modification; protein ubiquitination. Scaffold subunit of some HBO1 complexes, which have a histone H4 acetyltransferase activity. Acts as an E3 ubiquitin-protein ligase mediating the ubiquitination and subsequent proteasomal degradation of target protein histone demethylase KDM1A. Also acts as a ubiquitin ligase E3 toward itself. Positive regulator of neurogenesis. The chain is E3 ubiquitin-protein ligase Jade-2 (JADE2) from Homo sapiens (Human).